The sequence spans 273 residues: Ribosomal RNA small subunit methyltransferase A (273 aa).

Positions 18, 20, 45, 66, 91, and 113 each coordinate S-adenosyl-L-methionine.

Belongs to the class I-like SAM-binding methyltransferase superfamily. rRNA adenine N(6)-methyltransferase family. RsmA subfamily.

It is found in the cytoplasm. It catalyses the reaction adenosine(1518)/adenosine(1519) in 16S rRNA + 4 S-adenosyl-L-methionine = N(6)-dimethyladenosine(1518)/N(6)-dimethyladenosine(1519) in 16S rRNA + 4 S-adenosyl-L-homocysteine + 4 H(+). Specifically dimethylates two adjacent adenosines (A1518 and A1519) in the loop of a conserved hairpin near the 3'-end of 16S rRNA in the 30S particle. May play a critical role in biogenesis of 30S subunits. This Escherichia coli O139:H28 (strain E24377A / ETEC) protein is Ribosomal RNA small subunit methyltransferase A.